Reading from the N-terminus, the 335-residue chain is Terpene synthase 4 (335 aa).

A DDxx(x)D/E motif motif is present at residues 103–108 (DDYIFE). The short motif at 243–251 (NDLYSFNRE) is the NDxxSxxxD/E motif element.

This sequence belongs to the terpene synthase family.

It carries out the reaction (2E,6E)-farnesyl diphosphate + H2O = (6E)-nerolidol + diphosphate. Functionally, terpene synthase that converts its substrate farnesyl diphosphate (FPP) into the sesquiterpene (E)-nerolidol. This is Terpene synthase 4 from Dictyostelium discoideum (Social amoeba).